Consider the following 132-residue polypeptide: Small ribosomal subunit protein uS8 (132 aa).

The protein belongs to the universal ribosomal protein uS8 family. In terms of assembly, part of the 30S ribosomal subunit. Contacts proteins S5 and S12.

Its function is as follows. One of the primary rRNA binding proteins, it binds directly to 16S rRNA central domain where it helps coordinate assembly of the platform of the 30S subunit. The chain is Small ribosomal subunit protein uS8 from Mycolicibacterium gilvum (strain PYR-GCK) (Mycobacterium gilvum (strain PYR-GCK)).